The following is a 419-amino-acid chain: MAQEVFQRTKPHVNIGTIGHVDHGKTTLTAAITMTLAVNSTCTPKKYDEIDAAPEERARGITINTAHVEYETASRHYAHVDCPGHADYIKNMITGAAQMDGAILVVSAADGPMPQTKEHILLAKQVGVPSIVVFLNKEDQVDDEEILQLVDLEVRESLINYEFPGDKVPVVAGSALMALQALTEKPNTLRGENKWVDKIYELMDAVDSYIPTPKRDIEKPFLMPIEDVFSIQGRGTVATGRIERGILKLGDIVELIGLNEKIRSTVVTGLEMFRRLLEQGFAGENIGVLLRGIEKKDIERGMVIAQPGTIEPHTRFEAQVYILRKEEGGRHSPFFAGYRPQFFVRTADVTGVIEAFEYDNGDKTRMVMPGDRVKMIVNLICPIAIEKKMRFAIREGGRTIGAGVVLQILDSTQLKSKNK.

Residues 10–214 (KPHVNIGTIG…AVDSYIPTPK (205 aa)) enclose the tr-type G domain. Residues 19–26 (GHVDHGKT) are G1. A GTP-binding site is contributed by 19–26 (GHVDHGKT). Thr26 lines the Mg(2+) pocket. A G2 region spans residues 60–64 (GITIN). The G3 stretch occupies residues 81–84 (DCPG). Residues 81–85 (DCPGH) and 136–139 (NKED) contribute to the GTP site. Residues 136–139 (NKED) form a G4 region. The segment at 174 to 176 (SAL) is G5.

This sequence belongs to the TRAFAC class translation factor GTPase superfamily. Classic translation factor GTPase family. EF-Tu/EF-1A subfamily.

It is found in the plastid. Its subcellular location is the chloroplast. The catalysed reaction is GTP + H2O = GDP + phosphate + H(+). GTP hydrolase that promotes the GTP-dependent binding of aminoacyl-tRNA to the A-site of ribosomes during protein biosynthesis. The sequence is that of Elongation factor Tu, chloroplastic (tufA) from Chara vulgaris (Common stonewort).